Reading from the N-terminus, the 294-residue chain is Polyketide transferase grgF (294 aa).

Residues C115, D240, and H269 contribute to the active site.

This sequence belongs to the polyketide transferase af380 family. Homodimer.

The protein operates within secondary metabolite biosynthesis. Polyketide transferase; part of the gene cluster that mediates the biosynthesis of gregatin A, a fungal polyketide featuring an alkylated furanone core. The PKS grgA synthesizes C11 and C4 polyketide chains in the presence and absence of the trans-enoyl reductase grgB, respectively. The polyketide transferase grgF is then responsible for the fusion of the two carbon chains to produce the furanone skeleton of gregatin A. GrgF first undergoes a conformational change to an open form, and the active site Cys-115 is acylated by the C11 chain. After the elimination of the phosphopantetheinyl chain, the second polyketide chain of four carbons long is delivered adjacent to the enzyme-bound C11 chain. The catalytic histidine, His-269, deprotonates a proton from C-2 of the long chain, and the resultant carbanion attacks the C-1 carbonyl of the crotonyl group to perform Claisen condensation, by which the phosphopantetheinyl chain is released. Eventually, hydrolysis of the thioester linkage probably by a His-269-activated water molecule completes the reaction to afford the grgF final product. Next, the cytochrome P450 monooxygenase grgG accepts the unstable grgF final product as substrate and performs the oxidative cyclization to furnish the gregatin scaffold and leads to the formation of desmethylgregatin A. Finally, the O-methyltransferase grgD methylates the carboxyl group of desmethylgregatin A to provide gregatin A. The sequence is that of Polyketide transferase grgF from Penicillium sp.